Here is a 252-residue protein sequence, read N- to C-terminus: Ribosomal RNA small subunit methyltransferase J (252 aa).

S-adenosyl-L-methionine-binding positions include 101–102 (RD), 117–118 (ER), 153–154 (SS), and aspartate 171.

The protein belongs to the methyltransferase superfamily. RsmJ family.

It is found in the cytoplasm. The enzyme catalyses guanosine(1516) in 16S rRNA + S-adenosyl-L-methionine = N(2)-methylguanosine(1516) in 16S rRNA + S-adenosyl-L-homocysteine + H(+). In terms of biological role, specifically methylates the guanosine in position 1516 of 16S rRNA. The polypeptide is Ribosomal RNA small subunit methyltransferase J (Pseudoalteromonas translucida (strain TAC 125)).